A 296-amino-acid chain; its full sequence is NmrA-like family domain-containing protein 1 (296 aa).

Residues 11-16 (GATGAQ), 37-41 (RSPGR), 58-59 (DQ), 79-81 (TNF), Lys-133, and 155-158 (YYEN) contribute to the NADP(+) site.

It belongs to the NmrA-type oxidoreductase family. In terms of assembly, homodimer.

The protein localises to the cytoplasm. It is found in the perinuclear region. Its subcellular location is the nucleus. Its function is as follows. Redox sensor protein. Undergoes restructuring and subcellular redistribution in response to changes in intracellular NADPH/NADP(+) levels. This is NmrA-like family domain-containing protein 1 (NMRAL1) from Gallus gallus (Chicken).